The following is a 647-amino-acid chain: RAF proto-oncogene serine/threonine-protein kinase (647 aa).

Serine 43 bears the Phosphoserine mark. The region spanning 56–131 (NTIRVFLPNK…IGEELQVDFL (76 aa)) is the RBD domain. The Phorbol-ester/DAG-type zinc finger occupies 138 to 184 (THNFARKTFLKLAFCDICQKFLLNGFRCQTCGYKFHEHCSTKVPTMC). Disordered stretches follow at residues 236–269 (HVFT…VSTT) and 284–334 (HSES…RPRG). Residues 239-269 (TFNTSNPSSEGTLSQRQRSTSTPNVHMVSTT) show a composition bias toward polar residues. Position 259 is a phosphoserine (serine 259). Phosphothreonine; by autocatalysis is present on threonine 268. Positions 286–297 (ESASPSALSGSP) are enriched in low complexity. A compositionally biased stretch (polar residues) spans 298–309 (NNMSPTGWSQPK). Residue serine 338 is modified to Phosphoserine. In terms of domain architecture, Protein kinase spans 349–609 (VMLSTRIGSG…PQILSSIELL (261 aa)). Residues 355-363 (IGSGSFGTV) and lysine 375 each bind ATP. Aspartate 468 (proton acceptor) is an active-site residue. A phosphoserine mark is found at serine 499 and serine 621.

Belongs to the protein kinase superfamily. TKL Ser/Thr protein kinase family. RAF subfamily. Phosphorylation at Ser-259 inactivates kinase activity. Dephosphorylation of Ser-259 by a complex containing protein phosphatase 1 relieves inactivation, leading to stimulate RAF1 activity. As to expression, isoform 1 was present in all tissues tested: skeletal muscle, intestine, brain, gizzard, heart, lung, kidney, bone marrow, spleen and bursa of Fabricius. Isoform 2 was only detected in brain, heart and skeletal muscle. In brain and heart isoform 1 is more abundant than isoform 2. In skeletal muscle isoform 2 is more abundant than isoform 1.

It is found in the cytoplasm. It localises to the cell membrane. It catalyses the reaction L-seryl-[protein] + ATP = O-phospho-L-seryl-[protein] + ADP + H(+). It carries out the reaction L-threonyl-[protein] + ATP = O-phospho-L-threonyl-[protein] + ADP + H(+). Serine/threonine-protein kinase that acts as a regulatory link between the membrane-associated Ras GTPases and the MAPK/ERK cascade, and this critical regulatory link functions as a switch determining cell fate decisions. RAF1 activation initiates a mitogen-activated protein kinase (MAPK) cascade that comprises a sequential phosphorylation of the dual-specific MAPK kinases (MAP2K1/MEK1 and MAP2K2/MEK2) and the extracellular signal-regulated kinases (MAPK3/ERK1 and MAPK1/ERK2). The polypeptide is RAF proto-oncogene serine/threonine-protein kinase (RAF1) (Gallus gallus (Chicken)).